The sequence spans 200 residues: uncharacterized protein (200 aa).

Residues 1–21 (MSNSAQRDARNSRDESARASD) are disordered. Residues 7–21 (RDARNSRDESARASD) are compositionally biased toward basic and acidic residues.

This is an uncharacterized protein from Mycobacterium tuberculosis (strain ATCC 25618 / H37Rv).